The chain runs to 181 residues: MLIYKDIFTDDELSSDSFPMKLVDDLVYEFKGKHVVRKEGEIVLAGSNPSAEEGAEDDGSDEHVERGIDIVLNHKLVEMNCYEDASMFKAYIKKFMKNVIDHMEKNNRDKADVDAFKKKIQGWVVSLLAKDRFKNLAFFIGERAAEGAENGQVAIIEYRDVDGTEVPTLMLVKEAIIEEKC.

The TCTP domain maps to 1 to 181 (MLIYKDIFTD…VKEAIIEEKC (181 aa)).

It belongs to the TCTP family.

The protein localises to the cytoplasm. Involved in calcium binding and microtubule stabilization. The sequence is that of Translationally-controlled tumor protein homolog (tct-1) from Caenorhabditis elegans.